A 429-amino-acid chain; its full sequence is Glutamate-1-semialdehyde 2,1-aminomutase (429 aa).

At Lys-267 the chain carries N6-(pyridoxal phosphate)lysine.

Belongs to the class-III pyridoxal-phosphate-dependent aminotransferase family. HemL subfamily. In terms of assembly, homodimer. It depends on pyridoxal 5'-phosphate as a cofactor.

The protein resides in the cytoplasm. It catalyses the reaction (S)-4-amino-5-oxopentanoate = 5-aminolevulinate. Its pathway is porphyrin-containing compound metabolism; protoporphyrin-IX biosynthesis; 5-aminolevulinate from L-glutamyl-tRNA(Glu): step 2/2. This is Glutamate-1-semialdehyde 2,1-aminomutase from Stenotrophomonas maltophilia (strain R551-3).